Here is a 109-residue protein sequence, read N- to C-terminus: UPF0060 membrane protein YfjF (109 aa).

4 helical membrane-spanning segments follow: residues 6-26 (ILLF…VWLW), 32-52 (PAGY…LPTF), 61-81 (VYAA…WLVD), and 87-107 (LYDW…LFAP).

The protein belongs to the UPF0060 family.

It is found in the cell membrane. The sequence is that of UPF0060 membrane protein YfjF (yfjF) from Bacillus subtilis (strain 168).